Reading from the N-terminus, the 56-residue chain is Small ribosomal subunit protein uS14 (56 aa).

Cys-21, Cys-24, Cys-39, and Cys-42 together coordinate Zn(2+).

This sequence belongs to the universal ribosomal protein uS14 family. Component of the 40S small ribosomal subunit. Zn(2+) is required as a cofactor.

Its subcellular location is the cytoplasm. It localises to the cytosol. It is found in the rough endoplasmic reticulum. This Lysiphlebus testaceipes (Greenbugs aphid parastoid) protein is Small ribosomal subunit protein uS14 (RpS29).